Consider the following 197-residue polypeptide: Phosphoheptose isomerase (197 aa).

The 162-residue stretch at 36–197 (MVNALLNEGK…IDSQLFGSEE (162 aa)) folds into the SIS domain. 51–53 (NGG) provides a ligand contact to substrate. Zn(2+) contacts are provided by H60 and E64. Substrate-binding positions include E64, 93–94 (ND), 119–121 (STS), S124, and Q174. Residues Q174 and H182 each coordinate Zn(2+).

The protein belongs to the SIS family. GmhA subfamily. In terms of assembly, homotetramer. The cofactor is Zn(2+).

It is found in the cytoplasm. The enzyme catalyses 2 D-sedoheptulose 7-phosphate = D-glycero-alpha-D-manno-heptose 7-phosphate + D-glycero-beta-D-manno-heptose 7-phosphate. It functions in the pathway carbohydrate biosynthesis; D-glycero-D-manno-heptose 7-phosphate biosynthesis; D-glycero-alpha-D-manno-heptose 7-phosphate and D-glycero-beta-D-manno-heptose 7-phosphate from sedoheptulose 7-phosphate: step 1/1. In terms of biological role, catalyzes the isomerization of sedoheptulose 7-phosphate in D-glycero-D-manno-heptose 7-phosphate. The protein is Phosphoheptose isomerase of Pseudomonas putida (strain W619).